A 257-amino-acid chain; its full sequence is Ribonuclease HII (257 aa).

The 186-residue stretch at 72-257 folds into the RNase H type-2 domain; that stretch reads TYIAGIDEVG…FAPIKDMIKK (186 aa). The a divalent metal cation site is built by Asp-78, Glu-79, and Asp-170.

It belongs to the RNase HII family. Mn(2+) serves as cofactor. Mg(2+) is required as a cofactor.

Its subcellular location is the cytoplasm. The catalysed reaction is Endonucleolytic cleavage to 5'-phosphomonoester.. Its function is as follows. Endonuclease that specifically degrades the RNA of RNA-DNA hybrids. The polypeptide is Ribonuclease HII (Bacillus anthracis (strain A0248)).